A 563-amino-acid chain; its full sequence is MGSLSNYALLQLTLTAFLTILVQPQHLLAPVFRTLSILTNQSNCWLCEHLDNAEQPELVFVPASASTWWTYSGQWMYERVWYPQAEVQNHSTSSYRKVTWHWEASMEAQGLSFAQVRLLEGNFSLCVENKNGSGPFLGNIPKQYCNQILWFDSTDGTFMPSIDVTNESRNDDDDTSVCLGTRQCSWFAGCTNRTWNSSAVPLIGLPNTQDYKWVDRNSGLTWSGNDTCLYSCQNQTKGLLYQLFRNLFCSYGLTEAHGKWRCADASITNDKGHDGHRTPTWWLTGSNLTLSVNNSGLFFLCGNGVYKGFPPKWSGRCGLGYLVPSLTRYLTLNASQITNLRSFIHKVTPHRCTQGDTDNPPLYCNPKDNSTIRALFPSLGTYDLEKAILNISKAMEQEFSATKQTLEAHQSKVSSLASASRKDHVLDIPTTQRQTACGTVGKQCCLYINYSEEIKSNIQRLHEASENLKNVPLLDWQGIFAKVGDWFRSWGYVLLIVLFCLFIFVLIYVRVFRKSRRSLNSQPLNLALSPQQSAQLLVSETSCQVSNRAMKGLTTHQYDTSLL.

Residues Met-1–His-26 form the signal peptide. Residues Leu-27 to Arg-488 are Extracellular-facing. Asn-122 and Asn-192 each carry an N-linked (GlcNAc...) asparagine glycan. The chain crosses the membrane as a helical span at residues Ser-489–Val-509. Residues Arg-510–Leu-563 are Cytoplasmic-facing.

It belongs to the gamma type-C retroviral envelope protein family. In terms of processing, N-glycosylated. Cleaved by some metalloproteinase at 432-Gln-Arg-433 (mainly) or 433-Arg-Gln-434, leading to release the secreted form (Endogenous retroviral envelope protein HEMO, secreted form) in the extracellular medium. Expressed at high level in the placenta and stem cells (at protein level). Also expressed in the kidney but at a lower level. Endogenous retroviral envelope protein HEMO, secreted form: Present in the blood of pregnant women (at protein level).

The protein localises to the cell membrane. The protein resides in the secreted. Its function is as follows. Endogenous envelope proteins originate from retroviral envelope proteins, which mediate receptor recognition and membrane fusion during early infection. Endogenous envelope proteins may have kept, lost or modified their original function during evolution. The protein is Endogenous retroviral envelope protein HEMO of Homo sapiens (Human).